The following is a 297-amino-acid chain: Superoxide dismutase 1 copper chaperone (297 aa).

Cysteine 11 contributes to the Cu cation binding site. Positions glycine 222–cysteine 263 are disordered. The span at serine 234–serine 257 shows a compositional bias: low complexity.

This sequence belongs to the CCS1 family.

Its subcellular location is the cytoplasm. Copper chaperone for superoxide dismutase 1 (sod1). Binds copper ions and delivers them specifically to sod1. Also has a role in cell protection against copper ion toxicity during conditions of copper excess. The C-terminal region is thought to act specifically in this sequestration role. The chain is Superoxide dismutase 1 copper chaperone (ccs1) from Schizosaccharomyces pombe (strain 972 / ATCC 24843) (Fission yeast).